We begin with the raw amino-acid sequence, 49 residues long: Large ribosomal subunit protein bL33A (49 aa).

It belongs to the bacterial ribosomal protein bL33 family.

In Bacillus cytotoxicus (strain DSM 22905 / CIP 110041 / 391-98 / NVH 391-98), this protein is Large ribosomal subunit protein bL33A.